The primary structure comprises 205 residues: GTP cyclohydrolase-2 (205 aa).

49–53 serves as a coordination point for GTP; sequence RIHSE. Zn(2+) contacts are provided by cysteine 54, cysteine 65, and cysteine 67. Residues glutamine 70, 92-94, and threonine 114 each bind GTP; that span reads EGR. The active-site Proton acceptor is aspartate 126. Arginine 128 serves as the catalytic Nucleophile. The GTP site is built by threonine 149 and lysine 154.

This sequence belongs to the GTP cyclohydrolase II family. It depends on Zn(2+) as a cofactor.

The catalysed reaction is GTP + 4 H2O = 2,5-diamino-6-hydroxy-4-(5-phosphoribosylamino)-pyrimidine + formate + 2 phosphate + 3 H(+). It participates in cofactor biosynthesis; riboflavin biosynthesis; 5-amino-6-(D-ribitylamino)uracil from GTP: step 1/4. Catalyzes the conversion of GTP to 2,5-diamino-6-ribosylamino-4(3H)-pyrimidinone 5'-phosphate (DARP), formate and pyrophosphate. This Shewanella amazonensis (strain ATCC BAA-1098 / SB2B) protein is GTP cyclohydrolase-2.